A 53-amino-acid chain; its full sequence is UPF0181 protein VC_A0569 (53 aa).

It belongs to the UPF0181 family.

The sequence is that of UPF0181 protein VC_A0569 from Vibrio cholerae serotype O1 (strain ATCC 39315 / El Tor Inaba N16961).